Here is a 133-residue protein sequence, read N- to C-terminus: P2Y purinoceptor 2 (133 aa).

The Cytoplasmic segment spans residues 1-26 (ISVHRCLGVLRPLHSLRWGRARYARR). The helical transmembrane segment at 27–47 (VAFAVWVLVLYCQAPVLYFVT) threads the bilayer. The Extracellular portion of the chain corresponds to 48–74 (TSTRSSRIICHDTSARELFSHFVAYSS). A helical membrane pass occupies residues 75–95 (VMLSLLFAAPFAVILVCYVLM). At 96-116 (ARRLLKPAYGTSGGLPRAKRK) the chain is on the cytoplasmic side. The helical transmembrane segment at 117-133 (SVRTIAIVLTVFVLCFL) threads the bilayer.

It belongs to the G-protein coupled receptor 1 family.

It localises to the cell membrane. Receptor for ATP and UTP coupled to G-proteins that activate a phosphatidylinositol-calcium second messenger system. The protein is P2Y purinoceptor 2 (P2RY2) of Bos taurus (Bovine).